A 172-amino-acid chain; its full sequence is Shikimate kinase (172 aa).

14–19 (GAGKST) is a binding site for ATP. Serine 18 lines the Mg(2+) pocket. Residues aspartate 36, arginine 60, and glycine 82 each coordinate substrate. Residue arginine 120 coordinates ATP. Arginine 139 serves as a coordination point for substrate. Glutamine 156 contributes to the ATP binding site.

It belongs to the shikimate kinase family. Monomer. Mg(2+) serves as cofactor.

The protein resides in the cytoplasm. It carries out the reaction shikimate + ATP = 3-phosphoshikimate + ADP + H(+). The protein operates within metabolic intermediate biosynthesis; chorismate biosynthesis; chorismate from D-erythrose 4-phosphate and phosphoenolpyruvate: step 5/7. Functionally, catalyzes the specific phosphorylation of the 3-hydroxyl group of shikimic acid using ATP as a cosubstrate. This chain is Shikimate kinase, found in Aliivibrio fischeri (strain ATCC 700601 / ES114) (Vibrio fischeri).